Reading from the N-terminus, the 293-residue chain is AKT-interacting protein (293 aa).

The segment covering 1–11 has biased composition (polar residues); it reads MNPFWSMSTNA. The interval 1–44 is disordered; that stretch reads MNPFWSMSTNAGRKRSDGEEQSGSGEQRASPARPPFGKKQLPSI. One can recognise a UBC core domain in the interval 75–223; the sequence is YLEYSLLAEF…VVDSVKLCNS (149 aa). The segment at 260–293 is disordered; the sequence is RPEDFNKGLPVSGLSWVKPGSTQPFSKEDNPLQT.

Belongs to the ubiquitin-conjugating enzyme family. FTS subfamily.

It is found in the cytoplasm. It localises to the cell membrane. Functionally, may function to promote vesicle trafficking and/or fusion. May also regulate apoptosis. The chain is AKT-interacting protein (aktip) from Danio rerio (Zebrafish).